The chain runs to 211 residues: Protein-L-isoaspartate O-methyltransferase (211 aa).

Ser-60 is a catalytic residue.

This sequence belongs to the methyltransferase superfamily. L-isoaspartyl/D-aspartyl protein methyltransferase family.

It localises to the cytoplasm. It carries out the reaction [protein]-L-isoaspartate + S-adenosyl-L-methionine = [protein]-L-isoaspartate alpha-methyl ester + S-adenosyl-L-homocysteine. In terms of biological role, catalyzes the methyl esterification of L-isoaspartyl residues in peptides and proteins that result from spontaneous decomposition of normal L-aspartyl and L-asparaginyl residues. It plays a role in the repair and/or degradation of damaged proteins. This Hahella chejuensis (strain KCTC 2396) protein is Protein-L-isoaspartate O-methyltransferase.